The sequence spans 167 residues: Ubiquitin-fold modifier-conjugating enzyme 1 (167 aa).

Cys116 acts as the Glycyl thioester intermediate in catalysis. A Glycyl lysine isopeptide (Lys-Gly) (interchain with G-Cter in UFM1) cross-link involves residue Lys122.

It belongs to the ubiquitin-conjugating enzyme family. UFC1 subfamily. In terms of assembly, interacts with UBA5 (via C-terminus). Interacts with UFL1. Interacts with UFM1. Interacts with KIRREL3. Post-translationally, ufmylated at Lys-122. Deufmylated by UFSP1.

In terms of biological role, E2-like enzyme which specifically catalyzes the second step in ufmylation. Accepts the ubiquitin-like modifier UFM1 from the E1 enzyme UBA5 and forms an intermediate with UFM1 via a thioester linkage. Ufmylation is involved in various processes, such as ribosome recycling, response to DNA damage, interferon response or reticulophagy (also called ER-phagy). The protein is Ubiquitin-fold modifier-conjugating enzyme 1 of Homo sapiens (Human).